We begin with the raw amino-acid sequence, 313 residues long: WUSCHEL-related homeobox 5 (313 aa).

The interval 1-32 (METTTTTLGGGGGGRAGGFSDPPSPLSPPLSP) is disordered. The span at 8–17 (LGGGGGGRAG) shows a compositional bias: gly residues. Residues 22 to 31 (PPSPLSPPLS) show a composition bias toward pro residues. The segment at residues 40-104 (LANARWTPTK…NHKARQRQKQ (65 aa)) is a DNA-binding region (homeobox; WUS-type). Disordered regions lie at residues 224–247 (AAGR…GRET) and 271–313 (CAAV…SGGR). Over residues 271–301 (CAAVSPTTPSASASFSWESESSDSPSSEAPP) the composition is skewed to low complexity.

It belongs to the WUS homeobox family.

It is found in the nucleus. Transcription factor which may be involved in developmental processes. The polypeptide is WUSCHEL-related homeobox 5 (WOX5) (Oryza sativa subsp. japonica (Rice)).